The following is an 876-amino-acid chain: Liprin-beta-2 (876 aa).

Positions 101-313 (AASNETYQER…TGLLNQYRKV (213 aa)) form a coiled coil. 3 positions are modified to phosphoserine: S329, S363, and S387. The tract at residues 356–376 (EMPPRCSSPTVGPPPLPQKSL) is disordered. 2 disordered regions span residues 425–451 (LPGK…PDAT) and 470–500 (VVND…PKGI). Over residues 473–489 (DLSSTSSGTESGPQSPL) the composition is skewed to polar residues. The residue at position 512 (S512) is a Phosphoserine. A disordered region spans residues 527-553 (RGGLRATAGPRLSRTRDSKGQKSDANA). SAM domains are found at residues 558-622 (WSTE…INTK), 630-693 (LDHI…LHVN), and 718-783 (WSNH…KFNA).

Belongs to the liprin family. Liprin-beta subfamily. In terms of assembly, forms homodimers and heterodimers. As to expression, widely expressed.

Its function is as follows. May regulate the disassembly of focal adhesions. Did not bind receptor-like tyrosine phosphatases type 2A. In Homo sapiens (Human), this protein is Liprin-beta-2 (PPFIBP2).